A 606-amino-acid polypeptide reads, in one-letter code: Double-stranded RNA-binding protein Staufen homolog 2 (606 aa).

DRBM domains are found at residues 8 to 75 (TPMC…ESSL) and 95 to 181 (TPTV…ALKN). Disordered stretches follow at residues 57-97 (SIKK…ITPT) and 177-205 (QALK…SDAS). Over residues 85–97 (ADSNSNPGSITPT) the composition is skewed to polar residues. Residues 192-205 (SEEKKETEENSDAS) show a composition bias toward basic and acidic residues. 3 consecutive DRBM domains span residues 207–274 (SEIS…ELKK), 307–375 (NPIS…QLGY), and 493–557 (QPSQ…QLSE). The segment at 580 to 606 (RLAERTESKPTNSGTTAQDCKDSKAVV) is disordered. Over residues 588 to 597 (KPTNSGTTAQ) the composition is skewed to polar residues.

RNA-binding protein required for the microtubule-dependent transport of RNAs within polarized cell types. In Danio rerio (Zebrafish), this protein is Double-stranded RNA-binding protein Staufen homolog 2 (stau2).